The primary structure comprises 181 residues: NADH-quinone oxidoreductase subunit 2 (181 aa).

Positions 83, 87, 88, 124, and 128 each coordinate [2Fe-2S] cluster. Cys-144 and Cys-172 form a disulfide bridge.

The protein belongs to the complex I 24 kDa subunit family. As to quaternary structure, NDH-1 is composed of 15 different subunits, Nqo1 to Nqo15. The complex has a L-shaped structure, with the hydrophobic arm (subunits Nqo7, Nqo8 and Nqo10 to Nqo14) embedded in the membrane and the hydrophilic peripheral arm (subunits Nqo1 to Nqo6, Nqo9 and Nqo15) protruding into the bacterial cytoplasm. The hydrophilic domain contains all the redox centers. [2Fe-2S] cluster serves as cofactor.

It is found in the cell membrane. It catalyses the reaction a quinone + NADH + 5 H(+)(in) = a quinol + NAD(+) + 4 H(+)(out). Its function is as follows. NDH-1 shuttles electrons from NADH, via FMN and iron-sulfur (Fe-S) centers, to quinones in the respiratory chain. The immediate electron acceptor for the enzyme in this species is menaquinone. Couples the redox reaction to proton translocation (for every two electrons transferred, four hydrogen ions are translocated across the cytoplasmic membrane), and thus conserves the redox energy in a proton gradient required for the synthesis of ATP. The polypeptide is NADH-quinone oxidoreductase subunit 2 (nqo2) (Thermus thermophilus (strain ATCC 27634 / DSM 579 / HB8)).